Consider the following 148-residue polypeptide: [Ribosomal protein bS18]-alanine N-acetyltransferase (148 aa).

One can recognise an N-acetyltransferase domain in the interval 2 to 147 (NTISSLETTD…DAIIMALPIS (146 aa)). 69 to 71 (IAV) lines the acetyl-CoA pocket. Residue E103 is the Proton acceptor of the active site. N108 is an acetyl-CoA binding site. The active-site Proton donor is the Y115.

The protein belongs to the acetyltransferase family. RimI subfamily.

The protein resides in the cytoplasm. It catalyses the reaction N-terminal L-alanyl-[ribosomal protein bS18] + acetyl-CoA = N-terminal N(alpha)-acetyl-L-alanyl-[ribosomal protein bS18] + CoA + H(+). In terms of biological role, acetylates the N-terminal alanine of ribosomal protein bS18. This chain is [Ribosomal protein bS18]-alanine N-acetyltransferase, found in Escherichia coli O157:H7.